The following is a 386-amino-acid chain: DNA-directed RNA polymerase subunit Rpo1C (386 aa).

The protein belongs to the RNA polymerase beta' chain family. In terms of assembly, part of the RNA polymerase complex.

It localises to the cytoplasm. The enzyme catalyses RNA(n) + a ribonucleoside 5'-triphosphate = RNA(n+1) + diphosphate. In terms of biological role, DNA-dependent RNA polymerase (RNAP) catalyzes the transcription of DNA into RNA using the four ribonucleoside triphosphates as substrates. Forms part of the jaw domain. The sequence is that of DNA-directed RNA polymerase subunit Rpo1C from Methanococcus vannielii (strain ATCC 35089 / DSM 1224 / JCM 13029 / OCM 148 / SB).